The primary structure comprises 425 residues: UPF0229 protein ETA_15540 (425 aa).

Positions 60–111 (NEPSFHQGRGGERYRVHPGNDHFVQNDRVDRPQGGGAGGSGQGNAGKDGEGQ) are disordered. Residues 68-90 (RGGERYRVHPGNDHFVQNDRVDR) show a composition bias toward basic and acidic residues. Residues 92-105 (QGGGAGGSGQGNAG) are compositionally biased toward gly residues.

The protein belongs to the UPF0229 family.

This chain is UPF0229 protein ETA_15540, found in Erwinia tasmaniensis (strain DSM 17950 / CFBP 7177 / CIP 109463 / NCPPB 4357 / Et1/99).